Consider the following 338-residue polypeptide: Fructose-1,6-bisphosphatase class 1 (338 aa).

Positions 90, 112, 114, and 115 each coordinate Mg(2+). Substrate is bound by residues 115–118 (DGSS), Asn-207, and Lys-273. Glu-279 provides a ligand contact to Mg(2+).

This sequence belongs to the FBPase class 1 family. Homotetramer. Mg(2+) serves as cofactor.

It is found in the cytoplasm. It carries out the reaction beta-D-fructose 1,6-bisphosphate + H2O = beta-D-fructose 6-phosphate + phosphate. The protein operates within carbohydrate biosynthesis; gluconeogenesis. This is Fructose-1,6-bisphosphatase class 1 from Stenotrophomonas maltophilia (strain K279a).